An 880-amino-acid chain; its full sequence is MKQLTGAQIRQMFLDFFQEKGHAVEPSASLVPHEDPSLLWINSGVATLKKYFDGRVIPQNPRITNAQKSIRTNDIENVGKTARHHTFFEMLGNFSIGDYFKEEAITWAWEFLTSDKWIGFDKELLSVTIHPEDEEAFTIWNEKMGVPKERIIRLEENFWDIGEGPSGPNTEIFYDRGEAYGNDFSDPELYPGGENERYLEVWNLVFSQFNHNPDGSYTPLPKKNIDTGMGLERMTSIVQDVPTNFDTDLFMPMIGATETISGEKYRNGDLEKDMAFKVIADHIRTVTFAVGDGALPSNEGRGYVLRRLLRRAVRYSKKLNINRPFMFELVPVVGEVMKDFYPEVLEKKDFIAKVVKNEEERFHETLHDGEAILSEVIAKAKEEKTTVISGVDAFRLYDTYGFPIELTEEYAEEAGMTVDHEGFENEMEKQRERARAARQDVDSMQVQGGVLGEVKVASEFVGYGTVATESNVVALVKNGEYTDSLQVGEEGQLMLDVTPFYAESGGQIADRGCLLADGVKVLVKDVQKAPNGQNLHQVVVEEGTLTKDAAVKAIIDTKNRSSVVKNHTATHLLHQALKDVLGTHVNQAGSLVTSERLRFDFSHFGQVQADELEKIERIVNEKIWESIDVEISQKAIEEAKEMGAMALFGEKYGDVVRVVQVGDYSLELCGGCHVDNTASIGIFKIVAESGIGAGIRRIEAVTGKSAYELMNDQVGLLKEAAGKMKTNPKDILTRVDGLFAEVKQLQKENESLAAKLSNIEAGNLTDSVMTVDGVNVLAAKVNVADMNNLRTMMDDLKNKLESAVVVLASVNDDKVNILAGVTKDLISQGYHAGKLVKEVASRCGGGGGGRPDMAQAGGKNPAQVEEALAFVQEYVKSVSK.

Residues histidine 567, histidine 571, cysteine 669, and histidine 673 each coordinate Zn(2+).

It belongs to the class-II aminoacyl-tRNA synthetase family. The cofactor is Zn(2+).

The protein resides in the cytoplasm. It catalyses the reaction tRNA(Ala) + L-alanine + ATP = L-alanyl-tRNA(Ala) + AMP + diphosphate. Catalyzes the attachment of alanine to tRNA(Ala) in a two-step reaction: alanine is first activated by ATP to form Ala-AMP and then transferred to the acceptor end of tRNA(Ala). Also edits incorrectly charged Ser-tRNA(Ala) and Gly-tRNA(Ala) via its editing domain. This Bacillus anthracis protein is Alanine--tRNA ligase.